The sequence spans 521 residues: GMP synthase [glutamine-hydrolyzing] (521 aa).

The region spanning 5–197 (KILILDFGSQ…VLDICGAQPS (193 aa)) is the Glutamine amidotransferase type-1 domain. The Nucleophile role is filled by cysteine 81. Active-site residues include histidine 171 and glutamate 173. One can recognise a GMPS ATP-PPase domain in the interval 198–390 (WTMPNYIEEA…LGLPREMVYR (193 aa)). 225–231 (SGGVDSS) is a binding site for ATP.

As to quaternary structure, homodimer.

The catalysed reaction is XMP + L-glutamine + ATP + H2O = GMP + L-glutamate + AMP + diphosphate + 2 H(+). The protein operates within purine metabolism; GMP biosynthesis; GMP from XMP (L-Gln route): step 1/1. In terms of biological role, catalyzes the synthesis of GMP from XMP. The protein is GMP synthase [glutamine-hydrolyzing] of Neisseria meningitidis serogroup C / serotype 2a (strain ATCC 700532 / DSM 15464 / FAM18).